Consider the following 134-residue polypeptide: Small ribosomal subunit protein bS6 (134 aa).

Positions 113 to 122 (NKDIKEKEQP) are enriched in basic and acidic residues. Positions 113–134 (NKDIKEKEQPSESNVDADLKVN) are disordered.

This sequence belongs to the bacterial ribosomal protein bS6 family.

Functionally, binds together with bS18 to 16S ribosomal RNA. This chain is Small ribosomal subunit protein bS6, found in Borrelia recurrentis (strain A1).